The chain runs to 300 residues: Large ribosomal subunit protein bL9m (300 aa).

The protein belongs to the bacterial ribosomal protein bL9 family. Component of the mitochondrial large ribosomal subunit (mt-LSU). Mature N.crassa 74S mitochondrial ribosomes consist of a small (37S) and a large (54S) subunit. The 37S small subunit contains a 16S ribosomal RNA (16S mt-rRNA) and 32 different proteins. The 54S large subunit contains a 23S rRNA (23S mt-rRNA) and 42 different proteins.

It localises to the mitochondrion. Functionally, component of the mitochondrial ribosome (mitoribosome), a dedicated translation machinery responsible for the synthesis of mitochondrial genome-encoded proteins, including at least some of the essential transmembrane subunits of the mitochondrial respiratory chain. The mitoribosomes are attached to the mitochondrial inner membrane and translation products are cotranslationally integrated into the membrane. This is Large ribosomal subunit protein bL9m (mrpl50) from Neurospora crassa (strain ATCC 24698 / 74-OR23-1A / CBS 708.71 / DSM 1257 / FGSC 987).